The following is a 651-amino-acid chain: Probable potassium transport system protein Kup (651 aa).

Transmembrane regions (helical) follow at residues 41–61 (LVLGALGVVYGDIGTSPIYAF), 82–102 (VVSFIFWALTLVVTVKYVLFV), 130–150 (LILGVGICGAALFFGDAVITP), 163–183 (IVAPNLTPFVVPATVVILVTL), 194–214 (VAIVFGPIMALWFVALGASGL), 235–255 (FLTVSPAVAFVTVGAVFLAMT), 276–296 (WLWIVFPCLLLNYFGQAAFIL), 309–329 (MIPSFALWPMVLLATAATVIA), 366–386 (IYIPRVNLLLGLAVVILVLGF), 395–415 (AYGIAVTGNMLVTTVLLYIVM), 426–446 (ALPIILGFLVIDMLFFSANII), and 450–470 (EGGWASIGIATVLVLIMWTWV).

Belongs to the HAK/KUP transporter (TC 2.A.72) family.

Its subcellular location is the cell inner membrane. The catalysed reaction is K(+)(in) + H(+)(in) = K(+)(out) + H(+)(out). Functionally, transport of potassium into the cell. Likely operates as a K(+):H(+) symporter. In Brucella ovis (strain ATCC 25840 / 63/290 / NCTC 10512), this protein is Probable potassium transport system protein Kup.